A 307-amino-acid chain; its full sequence is Ribonuclease Z (307 aa).

7 residues coordinate Zn(2+): H63, H65, D67, H68, H141, D212, and H270. The active-site Proton acceptor is D67.

The protein belongs to the RNase Z family. In terms of assembly, homodimer. Zn(2+) serves as cofactor.

The catalysed reaction is Endonucleolytic cleavage of RNA, removing extra 3' nucleotides from tRNA precursor, generating 3' termini of tRNAs. A 3'-hydroxy group is left at the tRNA terminus and a 5'-phosphoryl group is left at the trailer molecule.. In terms of biological role, zinc phosphodiesterase, which displays some tRNA 3'-processing endonuclease activity. Probably involved in tRNA maturation, by removing a 3'-trailer from precursor tRNA. The chain is Ribonuclease Z from Bacillus cereus (strain G9842).